Here is a 207-residue protein sequence, read N- to C-terminus: Small ribosomal subunit protein uS4 (207 aa).

The interval 33–54 (KLDSKPGQHGRTSGARTSDYGN) is disordered. A compositionally biased stretch (polar residues) spans 42 to 53 (GRTSGARTSDYG). Residues 97–160 (SRLDNVVYRM…KKQVRIAEAL (64 aa)) enclose the S4 RNA-binding domain.

It belongs to the universal ribosomal protein uS4 family. As to quaternary structure, part of the 30S ribosomal subunit. Contacts protein S5. The interaction surface between S4 and S5 is involved in control of translational fidelity.

Functionally, one of the primary rRNA binding proteins, it binds directly to 16S rRNA where it nucleates assembly of the body of the 30S subunit. With S5 and S12 plays an important role in translational accuracy. This Cupriavidus necator (strain ATCC 17699 / DSM 428 / KCTC 22496 / NCIMB 10442 / H16 / Stanier 337) (Ralstonia eutropha) protein is Small ribosomal subunit protein uS4.